Here is a 150-residue protein sequence, read N- to C-terminus: 6,7-dimethyl-8-ribityllumazine synthase (150 aa).

5-amino-6-(D-ribitylamino)uracil is bound by residues Phe11, 43–45, and 67–69; these read VFD and AVI. A (2S)-2-hydroxy-3-oxobutyl phosphate-binding site is contributed by 72–73; that stretch reads AT. Catalysis depends on His75, which acts as the Proton donor. 5-amino-6-(D-ribitylamino)uracil is bound at residue Leu100. Residue Arg115 coordinates (2S)-2-hydroxy-3-oxobutyl phosphate.

The protein belongs to the DMRL synthase family.

The catalysed reaction is (2S)-2-hydroxy-3-oxobutyl phosphate + 5-amino-6-(D-ribitylamino)uracil = 6,7-dimethyl-8-(1-D-ribityl)lumazine + phosphate + 2 H2O + H(+). Its pathway is cofactor biosynthesis; riboflavin biosynthesis; riboflavin from 2-hydroxy-3-oxobutyl phosphate and 5-amino-6-(D-ribitylamino)uracil: step 1/2. Its function is as follows. Catalyzes the formation of 6,7-dimethyl-8-ribityllumazine by condensation of 5-amino-6-(D-ribitylamino)uracil with 3,4-dihydroxy-2-butanone 4-phosphate. This is the penultimate step in the biosynthesis of riboflavin. This chain is 6,7-dimethyl-8-ribityllumazine synthase, found in Pyrobaculum calidifontis (strain DSM 21063 / JCM 11548 / VA1).